The sequence spans 1133 residues: DNA-directed RNA polymerase III subunit RPC2 (1133 aa).

An RNA-binding site is contributed by Lys-186. Arg-195 serves as a coordination point for DNA. Position 213 (Arg-213) interacts with RNA. Residue Asp-432 participates in DNA binding. RNA is bound by residues Gln-438 and Gln-692. Position 753 (Asp-753) interacts with Mg(2+). Lys-896, Lys-904, and Lys-1019 together coordinate RNA. Positions 1039, 1040, and 1046 each coordinate DNA. Residues Cys-1080, Cys-1083, Cys-1092, and Cys-1095 each coordinate Zn(2+). A C4-type zinc finger spans residues 1080–1095 (CGQCGLLGYSGWCHYC).

This sequence belongs to the RNA polymerase beta chain family. In terms of assembly, component of the RNA polymerase III (Pol III) complex consisting of 17 subunits: a ten-subunit catalytic core composed of POLR3A/RPC1, POLR3B/RPC2, POLR1C/RPAC1, POLR1D/RPAC2, POLR3K/RPC10, POLR2E/RPABC1, POLR2F/RPABC2, POLR2H/RPABC3, POLR2K/RPABC4 and POLR2L/RPABC5; a mobile stalk composed of two subunits POLR3H/RPC8 and CRCP/RPC9, protruding from the core and functioning primarily in transcription initiation; and additional subunits homologous to general transcription factors of the RNA polymerase II machinery, POLR3C/RPC3-POLR3F/RPC6-POLR3G/RPC7 heterotrimer required for transcription initiation and POLR3D/RPC4-POLR3E/RPC5 heterodimer involved in both transcription initiation and termination. Mg(2+) serves as cofactor.

The protein localises to the nucleus. It localises to the cytoplasm. The protein resides in the cytosol. It carries out the reaction RNA(n) + a ribonucleoside 5'-triphosphate = RNA(n+1) + diphosphate. Its function is as follows. Catalytic core component of RNA polymerase III (Pol III), a DNA-dependent RNA polymerase which synthesizes small non-coding RNAs using the four ribonucleoside triphosphates as substrates. Synthesizes 5S rRNA, snRNAs, tRNAs and miRNAs from at least 500 distinct genomic loci. Pol III-mediated transcription cycle proceeds through transcription initiation, transcription elongation and transcription termination stages. During transcription initiation, Pol III is recruited to DNA promoters type I, II or III with the help of general transcription factors and other specific initiation factors. Once the polymerase has escaped from the promoter it enters the elongation phase during which RNA is actively polymerized, based on complementarity with the template DNA strand. Transcription termination involves the release of the RNA transcript and polymerase from the DNA. Forms Pol III active center together with the largest subunit POLR3A/RPC1. A single-stranded DNA template strand of the promoter is positioned within the central active site cleft of Pol III. Appends one nucleotide at a time to the 3' end of the nascent RNA, with POLR3A/RPC1 contributing a Mg(2+)-coordinating DxDGD motif, and POLR3B/RPC2 participating in the coordination of a second Mg(2+) ion and providing lysine residues believed to facilitate Watson-Crick base pairing between the incoming nucleotide and template base. Typically, Mg(2+) ions direct a 5' nucleoside triphosphate to form a phosphodiester bond with the 3' hydroxyl of the preceding nucleotide of the nascent RNA, with the elimination of pyrophosphate. Pol III plays a key role in sensing and limiting infection by intracellular bacteria and DNA viruses. Acts as a nuclear and cytosolic DNA sensor involved in innate immune response. Can sense non-self dsDNA that serves as template for transcription into dsRNA. The non-self RNA polymerase III transcripts, such as Epstein-Barr virus-encoded RNAs (EBERs) induce type I interferon and NF-kappa-B through the RIG-I pathway. The polypeptide is DNA-directed RNA polymerase III subunit RPC2 (Homo sapiens (Human)).